Reading from the N-terminus, the 415-residue chain is Gamma-glutamyl phosphate reductase (415 aa).

It belongs to the gamma-glutamyl phosphate reductase family.

The protein localises to the cytoplasm. It catalyses the reaction L-glutamate 5-semialdehyde + phosphate + NADP(+) = L-glutamyl 5-phosphate + NADPH + H(+). It participates in amino-acid biosynthesis; L-proline biosynthesis; L-glutamate 5-semialdehyde from L-glutamate: step 2/2. Functionally, catalyzes the NADPH-dependent reduction of L-glutamate 5-phosphate into L-glutamate 5-semialdehyde and phosphate. The product spontaneously undergoes cyclization to form 1-pyrroline-5-carboxylate. This is Gamma-glutamyl phosphate reductase from Xylella fastidiosa (strain 9a5c).